The following is a 522-amino-acid chain: Sulfite reductase [NADPH] flavoprotein alpha-component (522 aa).

Positions 60-198 (ITILFGSQTG…DTERWSSDAL (139 aa)) constitute a Flavodoxin-like domain. A disordered region spans residues 217–242 (TLRSHQDLRSHQEQSRNRARPYDKDN). The span at 220-242 (SHQDLRSHQEQSRNRARPYDKDN) shows a compositional bias: basic and acidic residues. The region spanning 241–399 (DNPYTATLLE…VAPYRAFLQQ (159 aa)) is the FAD-binding FR-type domain.

As to quaternary structure, alpha(8)-beta(8). The alpha component is a flavoprotein, the beta component is a hemoprotein. FAD serves as cofactor. It depends on FMN as a cofactor.

The catalysed reaction is hydrogen sulfide + 3 NADP(+) + 3 H2O = sulfite + 3 NADPH + 4 H(+). Its function is as follows. Catalyzes the 6-electron reduction of sulfite to sulfide. This is one of several activities required for the biosynthesis of L-cysteine from sulfate. The flavo-protein component catalyzes the electron flow from NADPH -&gt; FAD -&gt; FMN to the hemoprotein component. This chain is Sulfite reductase [NADPH] flavoprotein alpha-component (cysJ), found in Thiocapsa roseopersicina.